Reading from the N-terminus, the 372-residue chain is 7-methylxanthosine synthase 1 (372 aa).

Tyr-18 contributes to the S-adenosyl-L-homocysteine binding site. Residues Asn-21 and Asn-25 each coordinate xanthosine. 7 residues coordinate S-adenosyl-L-homocysteine: Cys-62, Asn-67, Asp-101, Leu-102, Ser-140, Phe-141, and Cys-157. Xanthosine is bound at residue Tyr-158. Residue Cys-159 coordinates S-adenosyl-L-homocysteine. 2 residues coordinate xanthosine: Gln-161 and Trp-162. Asn-179, Asp-261, Phe-263, and Asn-264 together coordinate Mg(2+). Xanthosine-binding residues include Ser-316, Tyr-321, and Tyr-356.

It belongs to the methyltransferase superfamily. Type-7 methyltransferase family. The cofactor is Mg(2+). Expressed in stems, young leaves, floral buds, developing endosperm and immature fruits (grains). Detected in roots and old leaves, but not in mature fruits.

The catalysed reaction is xanthosine + S-adenosyl-L-methionine = 7-methylxanthosine + S-adenosyl-L-homocysteine. Its pathway is alkaloid biosynthesis. Its function is as follows. Involved in the biosynthesis of caffeine. Specific for xanthosine and could not use xanthosine 5'-monophosphate (XMP) as substrate. Catalyzes the 7-N-methylation activity of xanthosine, but does not have 1-N- or 3-N-methylation activity. The protein is 7-methylxanthosine synthase 1 of Coffea arabica (Arabian coffee).